The sequence spans 324 residues: tRNA dimethylallyltransferase (324 aa).

18 to 25 (GPTAVGKT) is an ATP binding site. Substrate is bound at residue 20 to 25 (TAVGKT). The interaction with substrate tRNA stretch occupies residues 43–46 (DSRQ).

It belongs to the IPP transferase family. Monomer. The cofactor is Mg(2+).

The catalysed reaction is adenosine(37) in tRNA + dimethylallyl diphosphate = N(6)-dimethylallyladenosine(37) in tRNA + diphosphate. Its function is as follows. Catalyzes the transfer of a dimethylallyl group onto the adenine at position 37 in tRNAs that read codons beginning with uridine, leading to the formation of N6-(dimethylallyl)adenosine (i(6)A). The chain is tRNA dimethylallyltransferase from Salinibacter ruber (strain DSM 13855 / M31).